The sequence spans 161 residues: RNA pyrophosphohydrolase (161 aa).

Residues 12-154 (PYRPGVGMMI…KRKLYQAVVK (143 aa)) form the Nudix hydrolase domain. The short motif at 46 to 67 (GGIVPGETPSIAAMREMLEEIG) is the Nudix box element.

This sequence belongs to the Nudix hydrolase family. RppH subfamily. The cofactor is a divalent metal cation.

Accelerates the degradation of transcripts by removing pyrophosphate from the 5'-end of triphosphorylated RNA, leading to a more labile monophosphorylated state that can stimulate subsequent ribonuclease cleavage. The chain is RNA pyrophosphohydrolase from Rickettsia bellii (strain OSU 85-389).